Reading from the N-terminus, the 317-residue chain is Acetyl-coenzyme A carboxylase carboxyl transferase subunit alpha (317 aa).

One can recognise a CoA carboxyltransferase C-terminal domain in the interval threonine 38 to glutamate 292.

This sequence belongs to the AccA family. As to quaternary structure, acetyl-CoA carboxylase is a heterohexamer composed of biotin carboxyl carrier protein (AccB), biotin carboxylase (AccC) and two subunits each of ACCase subunit alpha (AccA) and ACCase subunit beta (AccD).

Its subcellular location is the cytoplasm. It carries out the reaction N(6)-carboxybiotinyl-L-lysyl-[protein] + acetyl-CoA = N(6)-biotinyl-L-lysyl-[protein] + malonyl-CoA. The protein operates within lipid metabolism; malonyl-CoA biosynthesis; malonyl-CoA from acetyl-CoA: step 1/1. In terms of biological role, component of the acetyl coenzyme A carboxylase (ACC) complex. First, biotin carboxylase catalyzes the carboxylation of biotin on its carrier protein (BCCP) and then the CO(2) group is transferred by the carboxyltransferase to acetyl-CoA to form malonyl-CoA. In Oceanobacillus iheyensis (strain DSM 14371 / CIP 107618 / JCM 11309 / KCTC 3954 / HTE831), this protein is Acetyl-coenzyme A carboxylase carboxyl transferase subunit alpha.